A 381-amino-acid chain; its full sequence is Cytochrome b (381 aa).

4 consecutive transmembrane segments (helical) span residues 36–56 (FGSL…FLTM), 80–101 (WLIR…YIHI), 116–136 (WMVG…GYVL), and 181–201 (FYTF…IHLL). Residues H86 and H100 each coordinate heme b. Heme b-binding residues include H185 and H199. A ubiquinone is bound at residue H204. 4 helical membrane passes run 229–249 (FKDM…TLTN), 291–311 (LGGV…PLTF), 323–343 (MNQI…WIGA), and 350–370 (YVFV…INPM).

It belongs to the cytochrome b family. As to quaternary structure, the main subunits of complex b-c1 are: cytochrome b, cytochrome c1 and the Rieske protein. Heme b serves as cofactor.

The protein resides in the mitochondrion inner membrane. Its function is as follows. Component of the ubiquinol-cytochrome c reductase complex (complex III or cytochrome b-c1 complex) that is part of the mitochondrial respiratory chain. The b-c1 complex mediates electron transfer from ubiquinol to cytochrome c. Contributes to the generation of a proton gradient across the mitochondrial membrane that is then used for ATP synthesis. The polypeptide is Cytochrome b (MT-CYB) (Ostrinia nubilalis (European corn borer)).